The chain runs to 295 residues: Cbb3-type cytochrome c oxidase subunit CcoP (295 aa).

Topologically, residues 1–31 are cytoplasmic; that stretch reads MAQKEKDALSGVETTGHEWDGLRELNNPLPK. A helical membrane pass occupies residues 32-52; that stretch reads WWLYIFYVCIAWSLVYYVLYP. Over 53 to 295 the chain is Periplasmic; that stretch reads AWPLGKSYTK…VYVHNLGGGK (243 aa). Cytochrome c domains lie at 108–200 and 207–292; these read FAMA…LSLN and AAAE…HNLG. Residues Cys121, Cys124, His125, Met175, Cys220, Cys223, His224, and Met269 each contribute to the heme c site.

Belongs to the CcoP / FixP family. In terms of assembly, component of the cbb3-type cytochrome c oxidase at least composed of CcoN, CcoO, CcoQ and CcoP. Heme c serves as cofactor.

Its subcellular location is the cell inner membrane. The protein operates within energy metabolism; oxidative phosphorylation. Its function is as follows. C-type cytochrome. Part of the cbb3-type cytochrome c oxidase complex. CcoP subunit is required for transferring electrons from donor cytochrome c via its heme groups to CcoO subunit. From there, electrons are shuttled to the catalytic binuclear center of CcoN subunit where oxygen reduction takes place. The complex also functions as a proton pump. The chain is Cbb3-type cytochrome c oxidase subunit CcoP from Azospirillum brasilense.